A 275-amino-acid chain; its full sequence is Shikimate dehydrogenase (NADP(+)) (275 aa).

Shikimate is bound by residues 15-17 and T62; that span reads SKS. Catalysis depends on K66, which acts as the Proton acceptor. Residue E78 coordinates NADP(+). Shikimate-binding residues include N87 and D102. Residues 127–131, 151–156, and M215 each bind NADP(+); these read GAGGA and NRTPQK. Shikimate is bound at residue Y217. Position 239 (G239) interacts with NADP(+).

This sequence belongs to the shikimate dehydrogenase family. In terms of assembly, homodimer.

The catalysed reaction is shikimate + NADP(+) = 3-dehydroshikimate + NADPH + H(+). It participates in metabolic intermediate biosynthesis; chorismate biosynthesis; chorismate from D-erythrose 4-phosphate and phosphoenolpyruvate: step 4/7. Involved in the biosynthesis of the chorismate, which leads to the biosynthesis of aromatic amino acids. Catalyzes the reversible NADPH linked reduction of 3-dehydroshikimate (DHSA) to yield shikimate (SA). The sequence is that of Shikimate dehydrogenase (NADP(+)) from Nitrosospira multiformis (strain ATCC 25196 / NCIMB 11849 / C 71).